The sequence spans 122 residues: MSLTNEKIVEAIAEKSIMEVMELVKAIEDKFGVSAAAPVMVSGSAAAAAPVEEQTEFTVTLKEAGAKKVEVIKAVRAVTGLGLKEAKDLTEAGGILKEAVSKEEAEKVKKELEAAGATVEVK.

The protein belongs to the bacterial ribosomal protein bL12 family. In terms of assembly, homodimer. Part of the ribosomal stalk of the 50S ribosomal subunit. Forms a multimeric L10(L12)X complex, where L10 forms an elongated spine to which 2 to 4 L12 dimers bind in a sequential fashion. Binds GTP-bound translation factors.

Forms part of the ribosomal stalk which helps the ribosome interact with GTP-bound translation factors. Is thus essential for accurate translation. This Xylella fastidiosa (strain 9a5c) protein is Large ribosomal subunit protein bL12.